The following is a 231-amino-acid chain: 2,3-bisphosphoglycerate-dependent phosphoglycerate mutase (231 aa).

Substrate-binding positions include 10–17 (RHGQSEWN), 23–24 (TG), Arg-62, 89–92 (ERHY), Lys-100, 116–117 (RR), and 185–186 (GN). His-11 serves as the catalytic Tele-phosphohistidine intermediate. Glu-89 (proton donor/acceptor) is an active-site residue.

Belongs to the phosphoglycerate mutase family. BPG-dependent PGAM subfamily. As to quaternary structure, homodimer.

It carries out the reaction (2R)-2-phosphoglycerate = (2R)-3-phosphoglycerate. It functions in the pathway carbohydrate degradation; glycolysis; pyruvate from D-glyceraldehyde 3-phosphate: step 3/5. Catalyzes the interconversion of 2-phosphoglycerate and 3-phosphoglycerate. The polypeptide is 2,3-bisphosphoglycerate-dependent phosphoglycerate mutase (Buchnera aphidicola subsp. Acyrthosiphon pisum (strain 5A)).